The chain runs to 84 residues: Apoptosis inhibitor Rv3654c (84 aa).

The N-terminal stretch at Met-1–Ala-39 is a signal peptide.

Interacts with human polypyrimidine tract binding protein-associated splicing factor (PSF).

The protein localises to the secreted. It localises to the host cytoplasm. Functionally, effector protein that participates in the suppression of macrophage apoptosis by blocking the extrinsic pathway. Recognizes the host polypyrimidine tract binding protein-associated splicing factor (PSF), which probably leads to its cleavage, diminishing the level of caspase-8 in macrophages. The chain is Apoptosis inhibitor Rv3654c from Mycobacterium tuberculosis (strain ATCC 25618 / H37Rv).